A 365-amino-acid polypeptide reads, in one-letter code: 3,4-dihydroxy-2-butanone 4-phosphate synthase (365 aa).

The segment at 1 to 201 (MALNTIDELI…IADLIHYRLI (201 aa)) is DHBP synthase. D-ribulose 5-phosphate-binding positions include 27 to 28 (RE), aspartate 32, 140 to 144 (RAGHT), and glutamate 164. Position 28 (glutamate 28) interacts with Mg(2+). A Mg(2+)-binding site is contributed by histidine 143. The tract at residues 202 to 365 (HERTVERIAE…LEVVEYLPAE (164 aa)) is GTP cyclohydrolase II-like.

The protein in the N-terminal section; belongs to the DHBP synthase family. This sequence in the C-terminal section; belongs to the GTP cyclohydrolase II family. The cofactor is Mg(2+). It depends on Mn(2+) as a cofactor.

It catalyses the reaction D-ribulose 5-phosphate = (2S)-2-hydroxy-3-oxobutyl phosphate + formate + H(+). It participates in cofactor biosynthesis; riboflavin biosynthesis; 2-hydroxy-3-oxobutyl phosphate from D-ribulose 5-phosphate: step 1/1. Its function is as follows. Catalyzes the conversion of D-ribulose 5-phosphate to formate and 3,4-dihydroxy-2-butanone 4-phosphate. The chain is 3,4-dihydroxy-2-butanone 4-phosphate synthase (ribB) from Pseudomonas aeruginosa (strain ATCC 15692 / DSM 22644 / CIP 104116 / JCM 14847 / LMG 12228 / 1C / PRS 101 / PAO1).